We begin with the raw amino-acid sequence, 374 residues long: dTDP-3-amino-3,4,6-trideoxy-alpha-D-glucose transaminase (374 aa).

Pyridoxal 5'-phosphate is bound by residues glycine 60, glutamine 160, 181-186 (SFYPTK), tyrosine 214, tyrosine 221, 229-231 (NSR), and tyrosine 316. An N6-(pyridoxal phosphate)lysine modification is found at lysine 186.

It belongs to the degT/dnrJ/eryC1 family. Pyridoxal 5'-phosphate is required as a cofactor.

It carries out the reaction dTDP-3-amino-3,4,6-trideoxy-alpha-D-glucose + 2-oxoglutarate = dTDP-3-dehydro-4,6-dideoxy-alpha-D-glucose + L-glutamate. The protein operates within antibiotic biosynthesis. Its function is as follows. Involved in the biosynthesis of the amino sugar dTDP-L-megosamine which is found in the macrolide antibiotic and antiparasitic megalomicin A. Catalyzes the reversible transfer of the amino group from L-glutamate to the C-3 position of dTDP-3-keto-4,6-deoxyglucose to yield dTDP-3-amino-3,4,6-trideoxyglucose. This Micromonospora megalomicea subsp. nigra protein is dTDP-3-amino-3,4,6-trideoxy-alpha-D-glucose transaminase.